The primary structure comprises 259 residues: Acyl-[acyl-carrier-protein]--UDP-N-acetylglucosamine O-acyltransferase (259 aa).

The protein belongs to the transferase hexapeptide repeat family. LpxA subfamily. As to quaternary structure, homotrimer.

The protein resides in the cytoplasm. The enzyme catalyses a (3R)-hydroxyacyl-[ACP] + UDP-N-acetyl-alpha-D-glucosamine = a UDP-3-O-[(3R)-3-hydroxyacyl]-N-acetyl-alpha-D-glucosamine + holo-[ACP]. The protein operates within glycolipid biosynthesis; lipid IV(A) biosynthesis; lipid IV(A) from (3R)-3-hydroxytetradecanoyl-[acyl-carrier-protein] and UDP-N-acetyl-alpha-D-glucosamine: step 1/6. Involved in the biosynthesis of lipid A, a phosphorylated glycolipid that anchors the lipopolysaccharide to the outer membrane of the cell. The protein is Acyl-[acyl-carrier-protein]--UDP-N-acetylglucosamine O-acyltransferase of Psychrobacter sp. (strain PRwf-1).